The primary structure comprises 20 residues: Phospholipase A2 II-5b (20 aa).

This sequence belongs to the phospholipase A2 family. Group I subfamily. Ca(2+) serves as cofactor. As to expression, expressed by the venom gland.

Its subcellular location is the secreted. The enzyme catalyses a 1,2-diacyl-sn-glycero-3-phosphocholine + H2O = a 1-acyl-sn-glycero-3-phosphocholine + a fatty acid + H(+). In terms of biological role, snake venom phospholipase A2 (PLA2) that exhibits weak enzymatic activity. PLA2 catalyzes the calcium-dependent hydrolysis of the 2-acyl groups in 3-sn-phosphoglycerides. The chain is Phospholipase A2 II-5b from Notechis scutatus scutatus (Mainland tiger snake).